Here is a 1522-residue protein sequence, read N- to C-terminus: Histone-lysine N-methyltransferase EZH2 (1522 aa).

A disordered region spans residues 1–196; sequence MSPARGDANA…PKTPTPKNTE (196 aa). Residues 39-61 are compositionally biased toward basic and acidic residues; it reads NRENLRDRDRADKLEKLEKDAHA. 2 stretches are compositionally biased toward low complexity: residues 64–76 and 103–130; these read QTQT…PVTV and RGST…SPSL. Residues 141-162 are compositionally biased toward polar residues; sequence ILASRTSRFSNRTGIRDSQSPS. The segment covering 180-195 has biased composition (low complexity); sequence ATSNTPAPKTPTPKNT. Residues 190–220 form an SBD domain region; sequence PTPKNTEWTVDKIASALSVLAEEVPQNHSRL. An EBD domain region spans residues 221 to 250; it reads VNFLLEETEKRAPQPRHLSKTDPFAHMKSK. The interval 251-300 is BAM domain; that stretch reads AIDANRPRPEGVPTMDVKFKQHSGEYGKSRNSGRRFQYPVVCIKPDREPV. The tract at residues 301-320 is SAL domain; it reads PPYRFHHAEIRKNILALNSQ. Residues 321–360 are SRM domain; it reads LNFVPHLRDVDPNSAEEQKYSAWLMDLENLDSKSGFKIQP. The SANT1L domain stretch occupies residues 361 to 480; that stretch reads RSQKIAKRAQ…PIFDNKRAKD (120 aa). The segment at 406–426 is disordered; the sequence is PESDDSMTPQQKSNLLDTYSD. The segment covering 411 to 422 has biased composition (polar residues); sequence SMTPQQKSNLLD. An MCSS domain region spans residues 481 to 560; the sequence is APGSQKPPDE…EQRQKTEGGS (80 aa). Residues C508, C511, C516, H518, C570, C574, C615, C625, C685, H687, C691, C697, C699, C709, C713, C715, C720, C727, C729, C736, C746, C748, C755, C760, C763, and C784 each coordinate Zn(2+). The segment at 561-650 is SANT2L domain; the sequence is ANAPPAHPPC…PVEPRTIPKQ (90 aa). The CXC domain occupies 658–780; it reads RRKKQLMSDW…PENAYDEVLH (123 aa). The SET domain occupies 795-919; the sequence is KAVVLGKSQL…AGEELFFNYG (125 aa). S-adenosyl-L-homocysteine is bound by residues Y809, K852, S854, and Y855. The S-adenosyl-L-methionine site is built by Y809, K852, S854, Y855, N880, H881, and T926. S-adenosyl-L-homocysteine is bound at residue H881. An S-adenosyl-L-homocysteine-binding site is contributed by K927. The segment at 933–1522 is disordered; sequence NEQSGAETTP…KPARYRDEGE (590 aa). Residues 935-946 show a composition bias toward polar residues; it reads QSGAETTPQQPK. The span at 971–988 shows a compositional bias: acidic residues; the sequence is GFDDDDRDGNDSDPDDLW. The span at 992 to 1024 shows a compositional bias: low complexity; that stretch reads QQQQQQQQQQQQQQQQQQQQQQQQQQQQQQQQQ. Residues 1025–1038 are compositionally biased toward polar residues; that stretch reads AQKPQPSTSHQPQS. Basic and acidic residues predominate over residues 1053–1066; the sequence is SPDKQLRRENHDAQ. Positions 1072-1091 are enriched in low complexity; sequence QFQQQEQQQQQQQQQQQQQQ. The segment covering 1127–1136 has biased composition (polar residues); the sequence is DSSSGGSANE. Residues 1142–1162 show a composition bias toward basic residues; that stretch reads KPSRRGGARPGAGRKPKHRPP. Basic and acidic residues-rich tracts occupy residues 1207 to 1221 and 1228 to 1238; these read SDSK…TDKE and VNEKDREKGRD. Residues 1255–1299 show a composition bias toward low complexity; sequence KSAPSPAKKQASSPTKISDSNRTTSKNTSSNNNNNTNNNNNNNNN. Positions 1316–1330 are enriched in polar residues; the sequence is HLTNSQPAALSPSAT. Low complexity-rich tracts occupy residues 1355-1385 and 1415-1428; these read STMT…SSSS and SSSL…SVFS. Over residues 1455 to 1464 the composition is skewed to polar residues; the sequence is SGLNSTSLSQ. A compositionally biased stretch (basic and acidic residues) spans 1465–1494; that stretch reads ERGEKHEKHEKEKPKEKKGEKERERERDRS.

The protein belongs to the class V-like SAM-binding methyltransferase superfamily. Histone-lysine methyltransferase family. EZ subfamily. As to quaternary structure, component of the polycomb repressive complex 2 (PRC2) that consists of four core subunits icluding EZH2, EED, SUZ12, and RBBP4, among which EZH2 is the catalytic subunit and which minimally requires EED and SUZ12 for catalysis.

The protein resides in the nucleus. The enzyme catalyses L-lysyl(27)-[histone H3] + 3 S-adenosyl-L-methionine = N(6),N(6),N(6)-trimethyl-L-lysyl(27)-[histone H3] + 3 S-adenosyl-L-homocysteine + 3 H(+). Its activity is regulated as follows. The end product of PRC2 catalysis, H3K27me3, interacts with EED to stimulate the enzymatic activity of PRC2 allosterically. The enzymatic activity of PRC2 is regulated in a very complex manner and PCR2 can adopt different stages including the autoinhibited (A); SAM-bound autoinhibited (A'), basal (B), and H3K27me3-stimulated (S) stages. Actictivity is inhibited by pyridone inhibitors such as GSK126. Its function is as follows. Catalytic subunit of the of the Polycomb Repressive Complex 2 (PRC2), a histone H3 lysine methyltransferase responsible for generating mono-, di-, and tri-methylation on Lys27 (H3K27me1, H3K27me2 and H3K27me3). The tri-methylated form is known to be critical in gene repression, and its proper placement is essential in defining repression patterns during development. The PRC2 complex interacts with thousands of RNA species in vivo, but the physiological function of RNA binding has still to be determined. This Chaetomium thermophilum (strain DSM 1495 / CBS 144.50 / IMI 039719) (Thermochaetoides thermophila) protein is Histone-lysine N-methyltransferase EZH2.